The sequence spans 301 residues: Coiled-coil domain-containing protein 69-B (301 aa).

A disordered region spans residues 1 to 43 (MGSKTSKMCCPQLRKKKRQKAHKEGPSSQELNDLNAKSQGPNE). G2 carries the N-myristoyl glycine lipid modification. A compositionally biased stretch (polar residues) spans 26–41 (PSSQELNDLNAKSQGP). 2 coiled-coil regions span residues 42 to 167 (NELL…SILS) and 213 to 281 (KSTM…NLYR).

The protein belongs to the CCDC69 family.

It is found in the cytoplasm. The protein resides in the cytoskeleton. The protein localises to the spindle. Its subcellular location is the midbody. May act as a scaffold to regulate the recruitment and assembly of spindle midzone components. The chain is Coiled-coil domain-containing protein 69-B (ccdc69-b) from Xenopus laevis (African clawed frog).